We begin with the raw amino-acid sequence, 235 residues long: MSKQLIYSGKAKDIYTTEDENLIISTYKDQATAFNGVKKEQIAGKGVLNNQISSFIFEKLNAAGVATHFVEKLSDTEQLNKKVKIIPLEVVLRNYTAGSFSKRFGVDEGIALETPIVEFYYKNDDLDDPFINDEHVKFLQIADDQQIAYLKEEARRINELLKVWFAEIGLKLIDFKLEFGFDKDGKIILADEFSPDNCRLWDADGNHMDKDVFRRGLGELTDVYEIVWEKLQELK.

The protein belongs to the SAICAR synthetase family.

The enzyme catalyses 5-amino-1-(5-phospho-D-ribosyl)imidazole-4-carboxylate + L-aspartate + ATP = (2S)-2-[5-amino-1-(5-phospho-beta-D-ribosyl)imidazole-4-carboxamido]succinate + ADP + phosphate + 2 H(+). The protein operates within purine metabolism; IMP biosynthesis via de novo pathway; 5-amino-1-(5-phospho-D-ribosyl)imidazole-4-carboxamide from 5-amino-1-(5-phospho-D-ribosyl)imidazole-4-carboxylate: step 1/2. This is Phosphoribosylaminoimidazole-succinocarboxamide synthase from Streptococcus pneumoniae serotype 2 (strain D39 / NCTC 7466).